The primary structure comprises 238 residues: MAEIKYKRVLLKLSGEALSGEKGFGFDPETAKAVAEELKEVHDLGAELAIVCGGGNVWRGVTGEKAGMERAQADYMGMLATIQNGLFIQSALENIGVDTRVMTAIEMKAVAEPYIRRRAERHLEKGRVVIFAGGTGSPYFSTDTTSALRAAEINADVILMAKNGVDGVYNADPKLVADAIKFEHLTHMDVITKGLQVMDSTASTMSMDNHIPLVVFNMNEAGNITRVVRGEEIGTTVE.

12-15 (KLSG) provides a ligand contact to ATP. The interval 20–25 (GEKGFG) is involved in allosteric activation by GTP. G54 lines the UMP pocket. ATP-binding residues include G55 and R59. UMP contacts are provided by residues D74 and 135 to 142 (TGSPYFST). N163, Y169, and D172 together coordinate ATP.

The protein belongs to the UMP kinase family. Homohexamer.

It is found in the cytoplasm. The enzyme catalyses UMP + ATP = UDP + ADP. The protein operates within pyrimidine metabolism; CTP biosynthesis via de novo pathway; UDP from UMP (UMPK route): step 1/1. Allosterically activated by GTP. Inhibited by UTP. Its function is as follows. Catalyzes the reversible phosphorylation of UMP to UDP. In Lactococcus lactis subsp. lactis (strain IL1403) (Streptococcus lactis), this protein is Uridylate kinase.